We begin with the raw amino-acid sequence, 636 residues long: Epsin-3 (636 aa).

Residues Arg-8, Lys-11, Arg-25, Asn-30, Arg-63, and His-73 each coordinate a 1,2-diacyl-sn-glycero-3-phospho-(1D-myo-inositol-4,5-bisphosphate). Residues 12–144 (NIVHNYSEAE…KDEERLRQER (133 aa)) enclose the ENTH domain. A disordered region spans residues 153–503 (RMALEGMGIG…TPESFLGPSA (351 aa)). Over residues 174–189 (GSPSSYTSASSSPRYA) the composition is skewed to low complexity. 2 positions are modified to phosphoserine: Ser-184 and Ser-185. 2 UIM domains span residues 202–221 (EEEL…AERP) and 229–248 (DEDL…HEKG). Basic and acidic residues-rich tracts occupy residues 214 to 231 (SREE…RDED) and 242 to 256 (RQEH…KGDD). Ser-257 bears the Phosphoserine mark. Basic and acidic residues predominate over residues 270 to 288 (RQRDREPEREERKEEEKLK). 5 consecutive repeat copies span residues 315–317 (DPW), 338–340 (DPW), 365–367 (EPW), 381–383 (DPW), and 398–400 (DPW). The interval 315 to 400 (DPWDIPGLRP…KLPSTGADPW (86 aa)) is 5 X 3 AA repeats of [DE]-P-W. The segment covering 426–435 (ESTEPKESRD) has biased composition (basic and acidic residues). A run of 2 repeats spans residues 523–525 (NPF) and 536–538 (NPF). The segment at 523–635 (NPFLTGLGVP…LPPQAGTNPF (113 aa)) is 3 X 3 AA repeats of N-P-F. Positions 607–616 (PPPASLPQPL) are enriched in pro residues. The disordered stretch occupies residues 607-636 (PPPASLPQPLLPTSGPMGPLPPQAGTNPFL). Repeat 3 spans residues 633–635 (NPF).

This sequence belongs to the epsin family.

Its subcellular location is the cytoplasm. The protein localises to the cell cortex. It localises to the perinuclear region. It is found in the cytoplasmic vesicle. The protein resides in the clathrin-coated vesicle. The polypeptide is Epsin-3 (Epn3) (Mus musculus (Mouse)).